A 481-amino-acid chain; its full sequence is Probable ATP-dependent RNA helicase ddx6 (481 aa).

Positions 1-72 (MSTARTENPV…SVIKPGDDWK (72 aa)) are disordered. Polar residues predominate over residues 41 to 51 (INQLKNASTIN). The segment covering 52–63 (SGSQQQAQSMSS) has biased composition (low complexity). The Q motif motif lies at 95-123 (NEFEDYCLKRELLMGIFEMGWEKPSPIQE). A Helicase ATP-binding domain is found at 126–297 (IPIALSGRDI…TSHLQKPYEI (172 aa)). 139–146 (AKNGTGKS) is an ATP binding site. The DEAD box motif lies at 245 to 248 (DEAD). Residues 307–467 (GVTQYYAYVT…PIPSSIDKSL (161 aa)) form the Helicase C-terminal domain.

Belongs to the DEAD box helicase family. DDX6/DHH1 subfamily. In terms of assembly, component of a ribonucleoprotein (RNP) complex, composed at least of cpeb1, lsm14b/rap55b, ddx6/Xp54, ybx2/frgy2, pat1/P100, eif4enif1/4E-T and eif4e1b. Component of a ribonucleoprotein (RNP) complex, composed at least of elavl1/elrA and/or elavl2/elrB, igf2bp3/vg1RBP, ddx6/Xp54, ybx2/frgy2, lsm14b/rap55b and, in a subset of RNP complexes, stau1/staufen. Component of a ribonucleoprotein (RNP) complex, composed at least of lsm14a/rap55a, ybx2/frgy2, ddx6/Xp54 and eif4enif1/4E-T. Interacts with lsm14a/rap55a.

Its subcellular location is the cytoplasm. It is found in the P-body. The protein localises to the nucleus. It catalyses the reaction ATP + H2O = ADP + phosphate + H(+). ATP-dependent RNA helicase that is an integral component of messenger ribonucleoprotein complexes (mRNPs), storage particles that mask maternal mRNAs from the translational apparatus during oocyte maturation. This chain is Probable ATP-dependent RNA helicase ddx6 (ddx6), found in Xenopus tropicalis (Western clawed frog).